The primary structure comprises 267 residues: Undecaprenyl-diphosphatase (267 aa).

7 consecutive transmembrane segments (helical) span residues 1–21 (MTLW…FLPI), 39–59 (AGVA…LFYY), 85–105 (AKLG…GFMV), 117–137 (LLIA…DFWG), 189–209 (FSFL…LWKL), 220–240 (LIAL…ALFI), and 246–266 (VGMM…FFVF).

This sequence belongs to the UppP family.

The protein localises to the cell inner membrane. It catalyses the reaction di-trans,octa-cis-undecaprenyl diphosphate + H2O = di-trans,octa-cis-undecaprenyl phosphate + phosphate + H(+). Its function is as follows. Catalyzes the dephosphorylation of undecaprenyl diphosphate (UPP). Confers resistance to bacitracin. The protein is Undecaprenyl-diphosphatase of Dichelobacter nodosus (strain VCS1703A).